The following is a 394-amino-acid chain: Aromatic-amino-acid aminotransferase (394 aa).

Substrate is bound by residues G34, Y65, W127, and N180. K243 is modified (N6-(pyridoxal phosphate)lysine). R371 is a binding site for substrate.

Belongs to the class-I pyridoxal-phosphate-dependent aminotransferase family. In terms of assembly, homodimer. The cofactor is pyridoxal 5'-phosphate.

It localises to the cytoplasm. The enzyme catalyses an aromatic L-alpha-amino acid + 2-oxoglutarate = an aromatic oxo-acid + L-glutamate. Functionally, shows activities toward both dicarboxylic and aromatic substrates. This Paracoccus denitrificans protein is Aromatic-amino-acid aminotransferase (tyrB).